The sequence spans 443 residues: ATP-dependent protease ATPase subunit HslU (443 aa).

ATP-binding positions include Ile-18, 60–65 (GVGKTE), Asp-256, Glu-321, and Arg-393.

The protein belongs to the ClpX chaperone family. HslU subfamily. A double ring-shaped homohexamer of HslV is capped on each side by a ring-shaped HslU homohexamer. The assembly of the HslU/HslV complex is dependent on binding of ATP.

The protein resides in the cytoplasm. Functionally, ATPase subunit of a proteasome-like degradation complex; this subunit has chaperone activity. The binding of ATP and its subsequent hydrolysis by HslU are essential for unfolding of protein substrates subsequently hydrolyzed by HslV. HslU recognizes the N-terminal part of its protein substrates and unfolds these before they are guided to HslV for hydrolysis. The protein is ATP-dependent protease ATPase subunit HslU of Wigglesworthia glossinidia brevipalpis.